A 382-amino-acid chain; its full sequence is Protein PEP-RELATED DEVELOPMENT ARRESTED 1 homolog, chloroplastic (382 aa).

Residues 1 to 44 (MAILPLSISHSLTSALSATSSGIGRPVARLLHPRVPSRPTVICL) constitute a chloroplast transit peptide.

It localises to the plastid. The protein resides in the chloroplast stroma. Its subcellular location is the chloroplast nucleoid. In terms of biological role, plays an essential role in early steps of chloroplast development. May be involved in the redox control of plastid gene expression by maintening the redox state around chloroplast nucleoids. May positively regulate plastid-encoded RNA polymerase (PEP) activity. The sequence is that of Protein PEP-RELATED DEVELOPMENT ARRESTED 1 homolog, chloroplastic from Oryza sativa subsp. japonica (Rice).